Consider the following 215-residue polypeptide: Thymidylate kinase (215 aa).

12–19 (GLEGAGKT) contributes to the ATP binding site.

This sequence belongs to the thymidylate kinase family.

The catalysed reaction is dTMP + ATP = dTDP + ADP. In terms of biological role, phosphorylation of dTMP to form dTDP in both de novo and salvage pathways of dTTP synthesis. This Halorhodospira halophila (strain DSM 244 / SL1) (Ectothiorhodospira halophila (strain DSM 244 / SL1)) protein is Thymidylate kinase.